Reading from the N-terminus, the 405-residue chain is Aspartokinase (405 aa).

2 ACT domains span residues 267-344 and 345-405; these read VSME…AKVS and IVGV…QLDQ.

This sequence belongs to the aspartokinase family.

The catalysed reaction is L-aspartate + ATP = 4-phospho-L-aspartate + ADP. The protein operates within amino-acid biosynthesis; L-lysine biosynthesis via DAP pathway; (S)-tetrahydrodipicolinate from L-aspartate: step 1/4. It participates in amino-acid biosynthesis; L-methionine biosynthesis via de novo pathway; L-homoserine from L-aspartate: step 1/3. It functions in the pathway amino-acid biosynthesis; L-threonine biosynthesis; L-threonine from L-aspartate: step 1/5. The sequence is that of Aspartokinase (lysC) from Helicobacter pylori (strain J99 / ATCC 700824) (Campylobacter pylori J99).